A 468-amino-acid polypeptide reads, in one-letter code: Nicotinamide phosphoribosyltransferase (468 aa).

Arginine 180 serves as a coordination point for diphosphate. Aspartate 203 is a binding site for beta-nicotinamide D-ribonucleotide. Residues histidine 229 and arginine 293 each contribute to the diphosphate site. Histidine 229 carries the post-translational modification Phosphohistidine; by autocatalysis. Residues aspartate 335 and arginine 373 each coordinate beta-nicotinamide D-ribonucleotide.

Belongs to the NAPRTase family. As to quaternary structure, homodimer. The dimeric structure consists of two protomers arranged head to tail, with domain A on one protomer interacting with domain B on the other protomer. In terms of processing, phosphorylation at His-229 plays a crucial role in enhancing the substrate affinity and is important for maintaining enzymatic activity.

The enzyme catalyses beta-nicotinamide D-ribonucleotide + diphosphate = 5-phospho-alpha-D-ribose 1-diphosphate + nicotinamide + H(+). It participates in cofactor biosynthesis; NAD(+) biosynthesis; nicotinamide D-ribonucleotide from 5-phospho-alpha-D-ribose 1-diphosphate and nicotinamide: step 1/1. ATP-dependent autophosphorylation plays a vital role in nicotinamide binding and enzyme activation. Activity is inhibited by FK866. In terms of biological role, catalyzes the condensation of nicotinamide with 5-phosphoribosyl-1-pyrophosphate to yield nicotinamide mononucleotide, an intermediate in the biosynthesis of NAD. Plays an important role in the biosynthesis of NAD via the nicotinamide (NAM) salvage pathway. Is also capable of hydrolyzing ATP and shows ATP-dependent autophosphorylation activity. This Xanthomonas campestris pv. campestris (strain 8004) protein is Nicotinamide phosphoribosyltransferase.